The following is a 629-amino-acid chain: tRNA uridine 5-carboxymethylaminomethyl modification enzyme MnmG (629 aa).

FAD-binding positions include 13 to 18 (GGGHAG), Val-125, and Ser-180. 273 to 287 (GPRYCPSIEDKVMRF) provides a ligand contact to NAD(+). Gln-370 contacts FAD.

The protein belongs to the MnmG family. In terms of assembly, homodimer. Heterotetramer of two MnmE and two MnmG subunits. The cofactor is FAD.

The protein localises to the cytoplasm. Functionally, NAD-binding protein involved in the addition of a carboxymethylaminomethyl (cmnm) group at the wobble position (U34) of certain tRNAs, forming tRNA-cmnm(5)s(2)U34. In Escherichia coli (strain SMS-3-5 / SECEC), this protein is tRNA uridine 5-carboxymethylaminomethyl modification enzyme MnmG.